Here is a 186-residue protein sequence, read N- to C-terminus: uncharacterized protein (186 aa).

A run of 3 helical transmembrane segments spans residues 43–63 (GAWV…HAIP), 69–89 (LAWT…FHWV), and 143–163 (WMFL…LPAV).

It localises to the endoplasmic reticulum membrane. This is an uncharacterized protein from Schizosaccharomyces pombe (strain 972 / ATCC 24843) (Fission yeast).